The primary structure comprises 181 residues: Protein Syd (181 aa).

Belongs to the Syd family.

The protein localises to the cell inner membrane. Interacts with the SecY protein in vivo. May bind preferentially to an uncomplexed state of SecY, thus functioning either as a chelating agent for excess SecY in the cell or as a regulatory factor that negatively controls the translocase function. This is Protein Syd from Citrobacter koseri (strain ATCC BAA-895 / CDC 4225-83 / SGSC4696).